Consider the following 325-residue polypeptide: NADH-quinone oxidoreductase subunit H (325 aa).

The next 8 helical transmembrane spans lie at 5–25, 75–95, 117–137, 157–177, 190–210, 240–260, 268–288, and 305–325; these read LIIILIKSAVVILLLFTAAAY, FVYWLAPGISLFTALFIFVLI, VGVVFLLAFSSLAVYGVVLAG, ISYEIPMGLSLLTVVLSTGTL, WLIWTNPISFIIYFITSFAET, FFLGEYINILAVSAIATTLFF, DIPILWFGLKVAIFVFIFMWV, and WKVLIPIAILNLIITAYFTLV.

This sequence belongs to the complex I subunit 1 family. As to quaternary structure, NDH-1 is composed of 14 different subunits. Subunits NuoA, H, J, K, L, M, N constitute the membrane sector of the complex.

The protein localises to the cell inner membrane. It catalyses the reaction a quinone + NADH + 5 H(+)(in) = a quinol + NAD(+) + 4 H(+)(out). In terms of biological role, NDH-1 shuttles electrons from NADH, via FMN and iron-sulfur (Fe-S) centers, to quinones in the respiratory chain. The immediate electron acceptor for the enzyme in this species is believed to be ubiquinone. Couples the redox reaction to proton translocation (for every two electrons transferred, four hydrogen ions are translocated across the cytoplasmic membrane), and thus conserves the redox energy in a proton gradient. This subunit may bind ubiquinone. The protein is NADH-quinone oxidoreductase subunit H of Protochlamydia amoebophila (strain UWE25).